The sequence spans 420 residues: Serine--tRNA ligase (420 aa).

Thr227–Glu229 contacts L-serine. ATP-binding positions include Arg258–Glu260 and Val274. Residue Glu281 participates in L-serine binding. Position 345–348 (Glu345–Ser348) interacts with ATP. Thr380 serves as a coordination point for L-serine.

This sequence belongs to the class-II aminoacyl-tRNA synthetase family. Type-1 seryl-tRNA synthetase subfamily. Homodimer. The tRNA molecule binds across the dimer.

The protein resides in the cytoplasm. The catalysed reaction is tRNA(Ser) + L-serine + ATP = L-seryl-tRNA(Ser) + AMP + diphosphate + H(+). It carries out the reaction tRNA(Sec) + L-serine + ATP = L-seryl-tRNA(Sec) + AMP + diphosphate + H(+). It functions in the pathway aminoacyl-tRNA biosynthesis; selenocysteinyl-tRNA(Sec) biosynthesis; L-seryl-tRNA(Sec) from L-serine and tRNA(Sec): step 1/1. In terms of biological role, catalyzes the attachment of serine to tRNA(Ser). Is also able to aminoacylate tRNA(Sec) with serine, to form the misacylated tRNA L-seryl-tRNA(Sec), which will be further converted into selenocysteinyl-tRNA(Sec). This chain is Serine--tRNA ligase, found in Nocardia farcinica (strain IFM 10152).